The primary structure comprises 836 residues: Protein AKNAD1 (836 aa).

Polar residues-rich tracts occupy residues 159 to 172 (SWPKEQTPELTDQL), 181 to 192 (SNKPGSATTTEE), and 227 to 248 (SYQGQSPQKQQTEKANSGNTFK). 2 disordered regions span residues 159-248 (SWPK…NTFK) and 303-325 (LETTPESNCVEKQHQEQKGKITE). A compositionally biased stretch (basic and acidic residues) spans 311-323 (CVEKQHQEQKGKI). Residues 372–484 (QKISQGKQMC…DVKEKMDESK (113 aa)) are a coiled coil. 2 disordered regions span residues 510-545 (SNEIPKEHPGHPSGPRGSGGSEVTGTPQGGPQEAPN) and 575-596 (MRLSSNSGEDPNGTPRRQDCAE).

Belongs to the AKNA family.

The chain is Protein AKNAD1 (AKNAD1) from Homo sapiens (Human).